The primary structure comprises 588 residues: Calcium/calmodulin-dependent protein kinase kinase 2 (588 aa).

A compositionally biased stretch (polar residues) spans 1–14; sequence MSSCVSSQPSSNRA. Disordered regions lie at residues 1–33 and 78–100; these read MSSCVSSQPSSNRAAPQDELGGRGSSSSESQKP and GQEVPLDTSGSQARPHLSGRKLS. N-acetylserine is present on serine 2. 5 positions are modified to phosphoserine: serine 100, serine 114, serine 129, serine 133, and serine 137. Residues 128-139 are compositionally biased toward low complexity; sequence YSPVSSPQSSPR. Residues 128-149 are disordered; the sequence is YSPVSSPQSSPRLPRRPTVESH. In terms of domain architecture, Protein kinase spans 165–446; the sequence is YTLKDEIGKG…VPEIKLHPWV (282 aa). ATP contacts are provided by residues 171–179 and lysine 194; that span reads IGKGSYGVV. Residues 204–226 are RP domain; it reads QAGFPRRPPPRGTRPAPGGCIQP. The interval 205–225 is disordered; the sequence is AGFPRRPPPRGTRPAPGGCIQ. Aspartate 312 serves as the catalytic Proton acceptor. The autoinhibitory domain stretch occupies residues 472-477; the sequence is ENSVKH. Positions 475–500 are calmodulin-binding; that stretch reads VKHIPSLATVILVKTMIRKRSFGNPF. Phosphoserine is present on residues proline 479, serine 495, serine 511, threonine 522, and serine 572. A disordered region spans residues 497–588; the sequence is GNPFEGSRRE…LRPEEAMEPE (92 aa). Over residues 521–536 the composition is skewed to basic and acidic residues; sequence PTRECESLSELKEARQ. Residues 579–588 show a composition bias toward basic and acidic residues; that stretch reads LRPEEAMEPE.

The protein belongs to the protein kinase superfamily. Ser/Thr protein kinase family. As to quaternary structure, interacts with calmodulin. Autophosphorylated and phosphorylated by PKA. Each isoform may show a different pattern of phosphorylation. As to expression, ubiquitously expressed with higher levels in the brain. Intermediate levels are detected in spleen, prostate, thyroid and leukocytes. The lowest level is in lung.

The protein resides in the nucleus. Its subcellular location is the cytoplasm. It is found in the cell projection. The protein localises to the neuron projection. The catalysed reaction is L-seryl-[protein] + ATP = O-phospho-L-seryl-[protein] + ADP + H(+). It catalyses the reaction L-threonyl-[protein] + ATP = O-phospho-L-threonyl-[protein] + ADP + H(+). Activated by Ca(2+)/calmodulin. Binding of calmodulin may relieve intrasteric autoinhibition. Autophosphorylation does not alter activity or regulation by Ca(2+)/calmodulin. In part, activity is independent on Ca(2+)/calmodulin. Its function is as follows. Calcium/calmodulin-dependent protein kinase belonging to a proposed calcium-triggered signaling cascade involved in a number of cellular processes. Isoform 1, isoform 2 and isoform 3 phosphorylate CAMK1 and CAMK4. Isoform 3 phosphorylates CAMK1D. Isoform 4, isoform 5 and isoform 6 lacking part of the calmodulin-binding domain are inactive. Efficiently phosphorylates 5'-AMP-activated protein kinase (AMPK) trimer, including that consisting of PRKAA1, PRKAB1 and PRKAG1. This phosphorylation is stimulated in response to Ca(2+) signals. Seems to be involved in hippocampal activation of CREB1. May play a role in neurite growth. Isoform 3 may promote neurite elongation, while isoform 1 may promoter neurite branching. The polypeptide is Calcium/calmodulin-dependent protein kinase kinase 2 (CAMKK2) (Homo sapiens (Human)).